The primary structure comprises 163 residues: Protein-export protein SecB (163 aa).

The protein belongs to the SecB family. As to quaternary structure, homotetramer, a dimer of dimers. One homotetramer interacts with 1 SecA dimer.

The protein resides in the cytoplasm. Its function is as follows. One of the proteins required for the normal export of preproteins out of the cell cytoplasm. It is a molecular chaperone that binds to a subset of precursor proteins, maintaining them in a translocation-competent state. It also specifically binds to its receptor SecA. This Shewanella woodyi (strain ATCC 51908 / MS32) protein is Protein-export protein SecB.